The primary structure comprises 196 residues: MKLVATLSSPEELELAEKADVVELRIDLFDFSGARVDKEKILTCRRVSDGGKFEGDERERIEKMKRAFDSLNPDYVDLESDLPDSAFDFNCRIIESYHNFIRTPDYSELKGIVEGRRGDLVKIATMGKSKRDVETIVRILTNYDDVVAFLMGERFSFTRVLAAYLGSPFIYCYVGSPKAPGQISLDDAREIISRLG.

Residues 23–25 (ELR) and Arg-45 contribute to the 3-dehydroquinate site. The Proton donor/acceptor role is filled by His-98. Lys-122 serves as the catalytic Schiff-base intermediate with substrate. Residues Arg-159 and Gln-182 each coordinate 3-dehydroquinate.

The protein belongs to the type-I 3-dehydroquinase family. Homodimer.

It catalyses the reaction 3-dehydroquinate = 3-dehydroshikimate + H2O. It participates in metabolic intermediate biosynthesis; chorismate biosynthesis; chorismate from D-erythrose 4-phosphate and phosphoenolpyruvate: step 3/7. In terms of biological role, involved in the third step of the chorismate pathway, which leads to the biosynthesis of aromatic amino acids. Catalyzes the cis-dehydration of 3-dehydroquinate (DHQ) and introduces the first double bond of the aromatic ring to yield 3-dehydroshikimate. This is 3-dehydroquinate dehydratase from Archaeoglobus fulgidus (strain ATCC 49558 / DSM 4304 / JCM 9628 / NBRC 100126 / VC-16).